We begin with the raw amino-acid sequence, 473 residues long: 1-aminocyclopropane-1-carboxylate synthase (473 aa).

Substrate-binding positions include aspartate 84–tyrosine 85, tyrosine 145, and aspartate 151. Lysine 273 carries the N6-(pyridoxal phosphate)lysine modification.

This sequence belongs to the class-I pyridoxal-phosphate-dependent aminotransferase family. As to quaternary structure, homodimer. Requires pyridoxal 5'-phosphate as cofactor.

The catalysed reaction is S-adenosyl-L-methionine = 1-aminocyclopropane-1-carboxylate + S-methyl-5'-thioadenosine + H(+). It catalyses the reaction (2S)-2-amino-3-butenoate + H2O = 2-oxobutanoate + NH4(+). It functions in the pathway alkene biosynthesis; ethylene biosynthesis via S-adenosyl-L-methionine; ethylene from S-adenosyl-L-methionine: step 1/2. Inhibited by L-aminoethoxyvinylglycine (AVG). Inhibited by L-vinylglycine (L-VG). Inhibited by S-methylmethionine through a L-VG ketimine intermediate. In terms of biological role, catalyzes the formation of 1-aminocyclopropane-1-carboxylate, a direct precursor of ethylene in higher plants. Also catalyzes the conversion of L-vinylglycine (L-VG) to alpha-ketobutyrate and ammonia. Can use S-methylmethionine as substrate. The sequence is that of 1-aminocyclopropane-1-carboxylate synthase from Malus domestica (Apple).